Consider the following 121-residue polypeptide: Small ribosomal subunit protein uS13 (121 aa).

Positions 97–121 are disordered; that stretch reads VRGQRTRTNARTRRGARKTVAGKKK. Over residues 100–121 the composition is skewed to basic residues; that stretch reads QRTRTNARTRRGARKTVAGKKK.

This sequence belongs to the universal ribosomal protein uS13 family. As to quaternary structure, part of the 30S ribosomal subunit. Forms a loose heterodimer with protein S19. Forms two bridges to the 50S subunit in the 70S ribosome.

Its function is as follows. Located at the top of the head of the 30S subunit, it contacts several helices of the 16S rRNA. In the 70S ribosome it contacts the 23S rRNA (bridge B1a) and protein L5 of the 50S subunit (bridge B1b), connecting the 2 subunits; these bridges are implicated in subunit movement. Contacts the tRNAs in the A and P-sites. This chain is Small ribosomal subunit protein uS13, found in Synechococcus sp. (strain WH7803).